Reading from the N-terminus, the 504-residue chain is Anaerobic nitric oxide reductase transcription regulator NorR (504 aa).

A 4-aspartylphosphate modification is found at Asp57. Residues 187–416 enclose the Sigma-54 factor interaction domain; it reads MIGLSPGMTQ…LEHAIHRAVV (230 aa). ATP is bound by residues 215–222 and 278–287; these read GETGTGKE and ADNGTLFLDE. The segment at residues 479-498 is a DNA-binding region (H-T-H motif); sequence WAACARMLETDVANLHRLAK.

It participates in nitrogen metabolism; nitric oxide reduction. In terms of biological role, required for the expression of anaerobic nitric oxide (NO) reductase, acts as a transcriptional activator for at least the norVW operon. Activation also requires sigma-54. This is Anaerobic nitric oxide reductase transcription regulator NorR from Escherichia coli O8 (strain IAI1).